The primary structure comprises 310 residues: Junctional adhesion molecule C (310 aa).

The signal sequence occupies residues 1 to 31 (MALSRRLRLRLCARLPDFFLLLLFRGCVIEA). At 32–241 (VNLKSSNRNP…GQDMEVYDLN (210 aa)) the chain is on the extracellular side. An Ig-like V-type domain is found at 35 to 127 (KSSNRNPVVH…VALNDRKEVD (93 aa)). Intrachain disulfides connect Cys53/Cys115 and Cys160/Cys219. N-linked (GlcNAc...) asparagine glycosylation is found at Asn104 and Asn192. The Ig-like C2-type domain maps to 139 to 236 (PVAPVCRVPK…AARCEGQDME (98 aa)). A helical transmembrane segment spans residues 242-262 (IAGIIGGVLVVLIVLAVITMG). At 263–310 (ICCAYRRGCFISSKQDGESYKSPGKHEGVNYIRTSEEGDFRHKSSFVI) the chain is on the cytoplasmic side. 2 S-palmitoyl cysteine lipidation sites follow: Cys264 and Cys265.

It belongs to the immunoglobulin superfamily. As to quaternary structure, interacts with ITGAM. Interacts with GORASP2. Proteolytically cleaved from endothelial cells surface into a soluble form by ADAM10 and ADAM17; the release of soluble JAM3 is increased by pro-inflammatory factors. Post-translationally, S-palmitoylated by ZDHHC7. S-palmitoylation promotes expression at tight junctions.

The protein localises to the cell membrane. Its subcellular location is the cell junction. It localises to the desmosome. The protein resides in the tight junction. It is found in the secreted. Functionally, junctional adhesion protein that mediates heterotypic cell-cell interactions with its cognate receptor JAM2 to regulate different cellular processes. Plays a role in homing and mobilization of hematopoietic stem and progenitor cells within the bone marrow. At the surface of bone marrow stromal cells, it contributes to the retention of the hematopoietic stem and progenitor cells expressing JAM3. Plays a central role in leukocytes extravasation by facilitating transmigration through the endothelium. Plays a role in spermatogenesis where JAM2 and JAM3, which are respectively expressed by Sertoli and germ cells, mediate an interaction between both cell types and play an essential role in the anchorage of germ cells onto Sertoli cells and the assembly of cell polarity complexes during spermatid differentiation. Also functions as a counter-receptor for ITGAM, mediating leukocyte-platelet interactions and is involved in the regulation of transepithelial migration of polymorphonuclear neutrophils (PMN). Plays a role in angiogenesis. Plays a role in the regulation of cell migration. During myogenesis, it is involved in myocyte fusion. In terms of biological role, promotes chemotaxis of vascular endothelial cells and stimulates angiogenesis. This Rattus norvegicus (Rat) protein is Junctional adhesion molecule C (Jam3).